We begin with the raw amino-acid sequence, 354 residues long: Lariat debranching enzyme (354 aa).

Positions 14, 16, and 45 each coordinate a divalent metal cation. The RNA site is built by K59, N90, H91, K134, and H156. N90 contacts a divalent metal cation. Residues 130-158 form a lariat recognition loop region; it reads SGIYKSFDEKKPYTYPPSPNDVVSLFHTR. Residue H180 coordinates a divalent metal cation. RNA contacts are provided by G201, D205, H230, M231, and H232. H230 serves as a coordination point for a divalent metal cation. Residue H232 participates in a divalent metal cation binding.

It belongs to the lariat debranching enzyme family. Fe(2+) serves as cofactor. Zn(2+) is required as a cofactor. It depends on Mn(2+) as a cofactor.

Its subcellular location is the cytoplasm. The protein localises to the perinuclear region. Active in presence of diverse metals including Fe(2+), Zn(2+) and Mn(2+). Binds two metal cations in two adjacent alpha and beta metal-binding pockets. The activity is the highest with Fe(2+) bound to the 2 metal-binding sites. The activity is slightly lower with Fe(2+) bound to the beta site and Zn(2+) to the alpha site and decreases further when only Zn(2+) is bound. No activity with Mn(2+). However, another study showed activity with Mn(2+) bound to the beta site and Zn(2+) to the alpha site. Mn(2+) appears unable to bind to the alpha site. Functionally, cleaves the 2'-5' phosphodiester linkage at the branch point of excised lariat intron RNA and converts them into linear molecules that can be subsequently degraded, thereby facilitating ribonucleotide turnover. The chain is Lariat debranching enzyme from Entamoeba histolytica (strain ATCC 30459 / HM-1:IMSS / ABRM).